The following is a 338-amino-acid chain: Methionine aminopeptidase 1D, mitochondrial (338 aa).

The N-terminal 47 residues, 1–47 (MAAPCAAQCLYRTGGLRLLQRISRLPHCHKDASLAHQCQFHRSFFWR), are a transit peptide targeting the mitochondrion. Substrate is bound at residue His164. Asp181, Asp192, and His255 together coordinate a divalent metal cation. His262 serves as a coordination point for substrate. Positions 287 and 318 each coordinate a divalent metal cation.

It belongs to the peptidase M24A family. Methionine aminopeptidase type 1 subfamily. It depends on Co(2+) as a cofactor. The cofactor is Zn(2+). Mn(2+) serves as cofactor. Fe(2+) is required as a cofactor.

Its subcellular location is the mitochondrion. The enzyme catalyses Release of N-terminal amino acids, preferentially methionine, from peptides and arylamides.. Functionally, removes the N-terminal methionine from nascent proteins. The N-terminal methionine is often cleaved when the second residue in the primary sequence is small and uncharged (Met-Ala-, Cys, Gly, Pro, Ser, Thr, or Val). Requires deformylation of the N(alpha)-formylated initiator methionine before it can be hydrolyzed. The protein is Methionine aminopeptidase 1D, mitochondrial (metap1d) of Danio rerio (Zebrafish).